The following is a 319-amino-acid chain: Acetyl-coenzyme A carboxylase carboxyl transferase subunit alpha (319 aa).

One can recognise a CoA carboxyltransferase C-terminal domain in the interval Asn35–Asp296.

The protein belongs to the AccA family. As to quaternary structure, acetyl-CoA carboxylase is a heterohexamer composed of biotin carboxyl carrier protein (AccB), biotin carboxylase (AccC) and two subunits each of ACCase subunit alpha (AccA) and ACCase subunit beta (AccD).

The protein resides in the cytoplasm. It catalyses the reaction N(6)-carboxybiotinyl-L-lysyl-[protein] + acetyl-CoA = N(6)-biotinyl-L-lysyl-[protein] + malonyl-CoA. It functions in the pathway lipid metabolism; malonyl-CoA biosynthesis; malonyl-CoA from acetyl-CoA: step 1/1. In terms of biological role, component of the acetyl coenzyme A carboxylase (ACC) complex. First, biotin carboxylase catalyzes the carboxylation of biotin on its carrier protein (BCCP) and then the CO(2) group is transferred by the carboxyltransferase to acetyl-CoA to form malonyl-CoA. The chain is Acetyl-coenzyme A carboxylase carboxyl transferase subunit alpha from Klebsiella pneumoniae subsp. pneumoniae (strain ATCC 700721 / MGH 78578).